The chain runs to 431 residues: Glutamyl-tRNA reductase (431 aa).

Substrate is bound by residues 49 to 52, serine 109, 114 to 116, and glutamine 120; these read TCNR and EGQ. Cysteine 50 serves as the catalytic Nucleophile. 189 to 194 lines the NADP(+) pocket; sequence GAGKMS.

This sequence belongs to the glutamyl-tRNA reductase family. In terms of assembly, homodimer.

It catalyses the reaction (S)-4-amino-5-oxopentanoate + tRNA(Glu) + NADP(+) = L-glutamyl-tRNA(Glu) + NADPH + H(+). It participates in porphyrin-containing compound metabolism; protoporphyrin-IX biosynthesis; 5-aminolevulinate from L-glutamyl-tRNA(Glu): step 1/2. It functions in the pathway porphyrin-containing compound metabolism; chlorophyll biosynthesis. Functionally, catalyzes the NADPH-dependent reduction of glutamyl-tRNA(Glu) to glutamate 1-semialdehyde (GSA). In Trichodesmium erythraeum (strain IMS101), this protein is Glutamyl-tRNA reductase.